A 386-amino-acid polypeptide reads, in one-letter code: Sphingosine 1-phosphate receptor 4 (386 aa).

The Extracellular segment spans residues M1–S56. Residues N2 and N32 are each glycosylated (N-linked (GlcNAc...) asparagine). The helical transmembrane segment at V57 to Y77 threads the bilayer. At M78–C87 the chain is on the cytoplasmic side. Residues L88 to L108 traverse the membrane as a helical segment. Residues S109–H120 are Extracellular-facing. Residues W121–F141 form a helical membrane-spanning segment. Residues T142 to R163 are Cytoplasmic-facing. The helical transmembrane segment at V164–L184 threads the bilayer. At G185 to L208 the chain is on the extracellular side. Residues F209–F229 traverse the membrane as a helical segment. Residues R230–T254 are Cytoplasmic-facing. A helical transmembrane segment spans residues V255–A275. Residues D276–G290 lie on the Extracellular side of the membrane. Residues M291–F311 form a helical membrane-spanning segment. At R312–T386 the chain is on the cytoplasmic side. A lipid anchor (S-palmitoyl cysteine) is attached at C325.

Belongs to the G-protein coupled receptor 1 family. Specifically expressed in fetal and adult lymphoid and hematopoietic tissue. Expressed in lung, spleen, thymus and lymph node but absent in other non-lymphatic tissue. Coexpressed with GNA15 at the same relative levels in all tissues examined, with the highest levels in adult spleen and lung.

The protein localises to the cell membrane. Functionally, receptor for the lysosphingolipid sphingosine 1-phosphate (S1P). S1P is a bioactive lysophospholipid that elicits diverse physiological effect on most types of cells and tissues. May be involved in cell migration processes that are specific for lymphocytes. The protein is Sphingosine 1-phosphate receptor 4 (S1pr4) of Mus musculus (Mouse).